Reading from the N-terminus, the 247-residue chain is Probable transcriptional regulatory protein lpg1286 (247 aa).

It belongs to the TACO1 family.

The protein localises to the cytoplasm. This is Probable transcriptional regulatory protein lpg1286 from Legionella pneumophila subsp. pneumophila (strain Philadelphia 1 / ATCC 33152 / DSM 7513).